A 401-amino-acid polypeptide reads, in one-letter code: Acetate kinase (401 aa).

Asparagine 9 is a Mg(2+) binding site. Residue lysine 16 coordinates ATP. A substrate-binding site is contributed by arginine 88. Aspartate 147 acts as the Proton donor/acceptor in catalysis. Residues 207–211, 282–284, and 333–337 contribute to the ATP site; these read HLGNG, DCR, and GIGEN. Glutamate 388 provides a ligand contact to Mg(2+).

Belongs to the acetokinase family. As to quaternary structure, homodimer. The cofactor is Mg(2+). Mn(2+) serves as cofactor.

The protein resides in the cytoplasm. It catalyses the reaction acetate + ATP = acetyl phosphate + ADP. It participates in metabolic intermediate biosynthesis; acetyl-CoA biosynthesis; acetyl-CoA from acetate: step 1/2. Functionally, catalyzes the formation of acetyl phosphate from acetate and ATP. Can also catalyze the reverse reaction. The chain is Acetate kinase from Haemophilus influenzae (strain 86-028NP).